Here is a 390-residue protein sequence, read N- to C-terminus: MPDLKTMMLNFGPQHPAAHGVLRLVLEMDGEVIERADPHIGLLHRGTEKLIEHKTYLQALPYFDRLDYVSPMSQEHAYSLCVEKLLQCEVPIRAKYLRVLFCELTRILNHLLNVSSQALDVGAMTPLLWLFEEREKILEFYERASGARFHAAYIRPGGIAADVPEDLIEDIAKFIEQFPKYIDDVDELLTENRIWKQRTVGISEISIKQALDWGFSGPMLRAAGLAWDLRKSQPYEIYDQLDFDIPIGQNGDCYDRYLVRMAEIRQSISLVKQCIEKMPEGQIKTEDRKISPPSRAEMKKSMEALIHHFKLYSEGYHVPEGEAYAVVEAPKGEFGVYIVSDGTNRPYRCRIRAPGFAHLQALDFMAKGHMLADVAAIIGSLDIVFGEIDR.

The protein belongs to the complex I 49 kDa subunit family. As to quaternary structure, NDH-1 is composed of 14 different subunits. Subunits NuoB, C, D, E, F, and G constitute the peripheral sector of the complex.

The protein resides in the cell membrane. It carries out the reaction a quinone + NADH + 5 H(+)(in) = a quinol + NAD(+) + 4 H(+)(out). NDH-1 shuttles electrons from NADH, via FMN and iron-sulfur (Fe-S) centers, to quinones in the respiratory chain. The immediate electron acceptor for the enzyme in this species is believed to be ubiquinone. Couples the redox reaction to proton translocation (for every two electrons transferred, four hydrogen ions are translocated across the cytoplasmic membrane), and thus conserves the redox energy in a proton gradient. In Wolbachia pipientis wMel, this protein is NADH-quinone oxidoreductase subunit D.